Reading from the N-terminus, the 542-residue chain is Phenylalanine--tRNA ligase beta subunit (542 aa).

In terms of domain architecture, B5 spans 269–344 (LRRYTVSVSA…MTIGYDKLSP (76 aa)). Residues aspartate 322, aspartate 328, glutamate 331, and glutamate 332 each coordinate Mg(2+).

It belongs to the phenylalanyl-tRNA synthetase beta subunit family. Type 2 subfamily. In terms of assembly, tetramer of two alpha and two beta subunits. It depends on Mg(2+) as a cofactor.

It localises to the cytoplasm. The catalysed reaction is tRNA(Phe) + L-phenylalanine + ATP = L-phenylalanyl-tRNA(Phe) + AMP + diphosphate + H(+). This Sulfolobus acidocaldarius (strain ATCC 33909 / DSM 639 / JCM 8929 / NBRC 15157 / NCIMB 11770) protein is Phenylalanine--tRNA ligase beta subunit.